The chain runs to 210 residues: Pyrrolidone-carboxylate peptidase (210 aa).

Active-site residues include E80, C143, and H162.

This sequence belongs to the peptidase C15 family. As to quaternary structure, homotetramer.

The protein localises to the cytoplasm. It carries out the reaction Release of an N-terminal pyroglutamyl group from a polypeptide, the second amino acid generally not being Pro.. Removes 5-oxoproline from various penultimate amino acid residues except L-proline. This is Pyrrolidone-carboxylate peptidase from Chromobacterium violaceum (strain ATCC 12472 / DSM 30191 / JCM 1249 / CCUG 213 / NBRC 12614 / NCIMB 9131 / NCTC 9757 / MK).